Consider the following 267-residue polypeptide: uncharacterized protein (267 aa).

This sequence to S.pombe SpAC18G6.12c.

This is an uncharacterized protein from Schizosaccharomyces pombe (strain 972 / ATCC 24843) (Fission yeast).